The primary structure comprises 180 residues: Ribosome maturation factor RimM (180 aa).

Residues 104–177 (PEEFHDHQLV…RVVVDPPGGL (74 aa)) form the PRC barrel domain.

The protein belongs to the RimM family. As to quaternary structure, binds ribosomal protein uS19.

Its subcellular location is the cytoplasm. An accessory protein needed during the final step in the assembly of 30S ribosomal subunit, possibly for assembly of the head region. Essential for efficient processing of 16S rRNA. May be needed both before and after RbfA during the maturation of 16S rRNA. It has affinity for free ribosomal 30S subunits but not for 70S ribosomes. This chain is Ribosome maturation factor RimM, found in Salinispora tropica (strain ATCC BAA-916 / DSM 44818 / JCM 13857 / NBRC 105044 / CNB-440).